Here is a 309-residue protein sequence, read N- to C-terminus: D-alanine--D-alanine ligase (309 aa).

Positions 106-305 (KMLWKAFGLP…FEQLVVKILE (200 aa)) constitute an ATP-grasp domain. ATP is bound at residue 136 to 191 (VEKLGLPVMVKPSLEGSSVGLTKVKRVEDLKSAVDFALKYDDTVLIEEWLSGAEFT). Mg(2+)-binding residues include Asp259, Glu272, and Asn274.

This sequence belongs to the D-alanine--D-alanine ligase family. Mg(2+) is required as a cofactor. The cofactor is Mn(2+).

It is found in the cytoplasm. It carries out the reaction 2 D-alanine + ATP = D-alanyl-D-alanine + ADP + phosphate + H(+). It participates in cell wall biogenesis; peptidoglycan biosynthesis. Functionally, cell wall formation. The sequence is that of D-alanine--D-alanine ligase from Pasteurella multocida (strain Pm70).